Consider the following 457-residue polypeptide: Multidrug resistance protein MdtK (457 aa).

The next 12 helical transmembrane spans lie at 11-31 (LLALAIPVILAQIAQTAMGFV), 53-73 (IWLPAILFGHGLLLALTPVIA), 93-113 (WLAGFVSVLIMLVLWNAGYII), 127-147 (AVGYLRALLWGAPGYLFFQVA), 160-180 (GMVMGFIGLLVNIPVNYIFIY), 189-209 (GGVGCGVATAAVYWVMFLAMV), 243-263 (LPIALALFFEVTLFAVVALLV), 276-296 (IALNFSSLMFVLPMSLAAAVT), 314-334 (AARTGLMVGVCMATLTAIFTV), 350-370 (VVTLAAHLMLLAAVYQISDSI), 387-407 (IFYITFTAYWVLGLPSGYILA), and 418-438 (PAGFWIGFIIGLTSAAIMMML).

Belongs to the multi antimicrobial extrusion (MATE) (TC 2.A.66.1) family. MdtK subfamily.

The protein localises to the cell inner membrane. Functionally, multidrug efflux pump that functions probably as a Na(+)/drug antiporter. The chain is Multidrug resistance protein MdtK from Escherichia coli O17:K52:H18 (strain UMN026 / ExPEC).